The chain runs to 25 residues: Cysteine-rich venom protein 25 (25 aa).

Residues 1-25 (NVDFNSESTRRKKKQKEIVDLXNSL) form a disordered region.

Belongs to the CRISP family. In terms of processing, contains 8 disulfide bonds. Expressed by the venom gland.

The protein localises to the secreted. This is Cysteine-rich venom protein 25 from Naja haje haje (Egyptian cobra).